The sequence spans 122 residues: Large ribosomal subunit protein uL14c (122 aa).

The protein belongs to the universal ribosomal protein uL14 family. As to quaternary structure, part of the 50S ribosomal subunit.

It is found in the plastid. The protein resides in the chloroplast. Functionally, binds to 23S rRNA. This is Large ribosomal subunit protein uL14c from Buxus microphylla (Littleleaf boxwood).